A 236-amino-acid polypeptide reads, in one-letter code: Segregation and condensation protein A (236 aa).

It belongs to the ScpA family. As to quaternary structure, component of a cohesin-like complex composed of ScpA, ScpB and the Smc homodimer, in which ScpA and ScpB bind to the head domain of Smc. The presence of the three proteins is required for the association of the complex with DNA.

It localises to the cytoplasm. Functionally, participates in chromosomal partition during cell division. May act via the formation of a condensin-like complex containing Smc and ScpB that pull DNA away from mid-cell into both cell halves. This is Segregation and condensation protein A from Streptococcus sanguinis (strain SK36).